We begin with the raw amino-acid sequence, 268 residues long: Embryonic abundant protein VF30.1 (268 aa).

The N-terminal stretch at 1–25 (MEFAHLTVLSLFCLAFVGITATSSG) is a signal peptide. A BURP domain is found at 68–259 (LFFEHDLHPG…GNKAAAWVPN (192 aa)). Residue Asn-259 is glycosylated (N-linked (GlcNAc...) asparagine).

As to expression, seed.

It localises to the secreted. The chain is Embryonic abundant protein VF30.1 from Vicia faba (Broad bean).